Consider the following 528-residue polypeptide: Ribonuclease Y (528 aa).

Residues 15-35 (SLLVFALICGSIIGYFLYSFF) form a helical membrane-spanning segment. The KH domain occupies 217–277 (NISVVNIPNE…IRREIAKKTL (61 aa)). The region spanning 343–436 (VLKHSLEVAF…VAIADTLSSA (94 aa)) is the HD domain.

Belongs to the RNase Y family.

The protein resides in the cell membrane. Endoribonuclease that initiates mRNA decay. This chain is Ribonuclease Y, found in Onion yellows phytoplasma (strain OY-M).